The primary structure comprises 167 residues: Urease accessory protein UreE (167 aa).

Residues 137–167 (ARGAYHAHGGHSHGHDHGHSHGHDHHDHSHD) are disordered. The segment covering 149–167 (HGHDHGHSHGHDHHDHSHD) has biased composition (basic and acidic residues).

This sequence belongs to the UreE family.

The protein resides in the cytoplasm. In terms of biological role, involved in urease metallocenter assembly. Binds nickel. Probably functions as a nickel donor during metallocenter assembly. In Rhizobium rhizogenes (strain K84 / ATCC BAA-868) (Agrobacterium radiobacter), this protein is Urease accessory protein UreE.